A 372-amino-acid polypeptide reads, in one-letter code: Saccharopine dehydrogenase [NAD(+), L-lysine-forming] (372 aa).

Positions 17 and 76 each coordinate L-saccharopine. K76 serves as the catalytic Proton acceptor. H95 acts as the Proton donor in catalysis. Q100 contacts L-saccharopine. R129 contributes to the NAD(+) binding site. The L-saccharopine site is built by R130 and F134. NAD(+) is bound by residues 202–203 (GR), D226, T230, Y250, and V277. C204 and C248 are disulfide-bonded. 278–280 (SAD) is an L-saccharopine binding site. 317-320 (IDHL) contributes to the NAD(+) binding site. Residues 370–372 (SKL) carry the Microbody targeting signal motif.

It belongs to the AlaDH/PNT family. Monomer.

The protein resides in the peroxisome. It catalyses the reaction L-saccharopine + NAD(+) + H2O = L-lysine + 2-oxoglutarate + NADH + H(+). It functions in the pathway amino-acid biosynthesis; L-lysine biosynthesis via AAA pathway; L-lysine from L-alpha-aminoadipate (fungal route): step 3/3. Its function is as follows. Catalyzes the NAD(+)-dependent cleavage of saccharopine to L-lysine and 2-oxoglutarate, the final step in the alpha-aminoadipate (AAA) pathway for lysin biosynthesis. The polypeptide is Saccharopine dehydrogenase [NAD(+), L-lysine-forming] (LYS1) (Candida glabrata (strain ATCC 2001 / BCRC 20586 / JCM 3761 / NBRC 0622 / NRRL Y-65 / CBS 138) (Yeast)).